The primary structure comprises 100 residues: Large ribosomal subunit protein eL30 (100 aa).

The protein belongs to the eukaryotic ribosomal protein eL30 family.

The sequence is that of Large ribosomal subunit protein eL30 (rpl30e) from Aeropyrum pernix (strain ATCC 700893 / DSM 11879 / JCM 9820 / NBRC 100138 / K1).